We begin with the raw amino-acid sequence, 166 residues long: uncharacterized protein (166 aa).

This is an uncharacterized protein from Saccharomyces cerevisiae (strain ATCC 204508 / S288c) (Baker's yeast).